The chain runs to 398 residues: Phosphoglycerate kinase (398 aa).

Residues 21–23 (DIN), Arg-36, 59–62 (HFGR), Arg-118, and Arg-151 each bind substrate. ATP-binding positions include Lys-201, Glu-323, and 353-356 (GGDT).

This sequence belongs to the phosphoglycerate kinase family. Monomer.

It is found in the cytoplasm. It catalyses the reaction (2R)-3-phosphoglycerate + ATP = (2R)-3-phospho-glyceroyl phosphate + ADP. It functions in the pathway carbohydrate degradation; glycolysis; pyruvate from D-glyceraldehyde 3-phosphate: step 2/5. The polypeptide is Phosphoglycerate kinase (Ruegeria pomeroyi (strain ATCC 700808 / DSM 15171 / DSS-3) (Silicibacter pomeroyi)).